A 32-amino-acid chain; its full sequence is Photosystem I reaction center subunit XII (32 aa).

A helical membrane pass occupies residues 4 to 26 (ISDSQIIVILLSVFITSILALRL).

The protein belongs to the PsaM family.

Its subcellular location is the plastid. The protein localises to the chloroplast thylakoid membrane. This is Photosystem I reaction center subunit XII from Marchantia polymorpha (Common liverwort).